The sequence spans 77 residues: Exodeoxyribonuclease 7 small subunit (77 aa).

The protein belongs to the XseB family. As to quaternary structure, heterooligomer composed of large and small subunits.

The protein resides in the cytoplasm. It catalyses the reaction Exonucleolytic cleavage in either 5'- to 3'- or 3'- to 5'-direction to yield nucleoside 5'-phosphates.. Bidirectionally degrades single-stranded DNA into large acid-insoluble oligonucleotides, which are then degraded further into small acid-soluble oligonucleotides. The protein is Exodeoxyribonuclease 7 small subunit of Lysinibacillus sphaericus (strain C3-41).